We begin with the raw amino-acid sequence, 244 residues long: 5-oxoprolinase subunit A (244 aa).

It belongs to the LamB/PxpA family. Forms a complex composed of PxpA, PxpB and PxpC.

It carries out the reaction 5-oxo-L-proline + ATP + 2 H2O = L-glutamate + ADP + phosphate + H(+). Its function is as follows. Catalyzes the cleavage of 5-oxoproline to form L-glutamate coupled to the hydrolysis of ATP to ADP and inorganic phosphate. The polypeptide is 5-oxoprolinase subunit A (Escherichia fergusonii (strain ATCC 35469 / DSM 13698 / CCUG 18766 / IAM 14443 / JCM 21226 / LMG 7866 / NBRC 102419 / NCTC 12128 / CDC 0568-73)).